The following is a 177-amino-acid chain: Protein PrsK (177 aa).

The first 21 residues, 1-21, serve as a signal peptide directing secretion; that stretch reads MIKSTGALLLFAALSAGQAMA.

Its subcellular location is the fimbrium. The polypeptide is Protein PrsK (prsK) (Escherichia coli).